A 256-amino-acid polypeptide reads, in one-letter code: MTTTSATAVLNGLSSSFLTGGKKTQALLGAHVTARVTTPKRFVVAAAAVAPKKSWIPAVKSGGNLVDPEWLDGSLPGDFGFDPLGLGKDPAFLKWYREAELIHGRWAMAAVLGIFVGQAWSGIPWFEAGADPGAIAPFSFGSLLGTQLLLMGWVESKRWVDFFDNDSQSIDWATPWSKTAENFANFTGEQGYPGGKFFDPLALAGTLNNGVYVPDTEKLERLKLAEIKHSRLAMLAMLIFYFEAGQGKTPLGALGL.

The transit peptide at 1-45 (MTTTSATAVLNGLSSSFLTGGKKTQALLGAHVTARVTTPKRFVVA) directs the protein to the chloroplast. The next 2 membrane-spanning stretches (helical) occupy residues 106–126 (WAMA…IPWF) and 134–154 (AIAP…MGWV).

The protein belongs to the ELIP/psbS family.

It localises to the plastid. The protein localises to the chloroplast thylakoid membrane. In Solanum lycopersicum (Tomato), this protein is Chlorophyll a-b binding protein CP24 10B, chloroplastic (CAP10B).